We begin with the raw amino-acid sequence, 300 residues long: CDAN1-interacting nuclease 1 (300 aa).

Its subcellular location is the nucleus. It is found in the cytoplasm. May play a role in erythroid cell differentiation. This Danio rerio (Zebrafish) protein is CDAN1-interacting nuclease 1 (cdin1).